A 148-amino-acid polypeptide reads, in one-letter code: Large ribosomal subunit protein uL15 (148 aa).

The interval 1-50 (MNLSNLKPAEGSTKTRKRIGRGPGSGLGGTSTRGHKGAKSRSGYSKKIGF) is disordered. Positions 21 to 31 (RGPGSGLGGTS) are enriched in gly residues.

Belongs to the universal ribosomal protein uL15 family. In terms of assembly, part of the 50S ribosomal subunit.

Binds to the 23S rRNA. In Bacteroides fragilis (strain ATCC 25285 / DSM 2151 / CCUG 4856 / JCM 11019 / LMG 10263 / NCTC 9343 / Onslow / VPI 2553 / EN-2), this protein is Large ribosomal subunit protein uL15.